Consider the following 334-residue polypeptide: MSLLNDIDQLSQVRTDWTRETAGEIYRAPFNDLIFAAQSVHRQCHPANQVQTSQLLSIKTGGCAEDCGYCNQSAHFDTGLKASKLMPLDDVLDAAKKAKDGGATRFCMGAAWRELKTRDEDVICDMISGVKSMGMETCVTLGMLTDSQANKLREAGLDYYNHNLDTAPEDYGRVISTRTYQDRIDTLSRVRGAGIHVCTGGIVGMGEDEAARIGLLTELASMDPHPESVPINHLVAVPNTPLGDSKPLDGIEFVRTIATARILMPRSMVRLSAGREGMSRELQALCFLAGANSIFVGEELLTTPNPEQNEDFDLFKSLGIEPMRLGETGTVPAE.

The Radical SAM core domain maps to 48 to 275 (NQVQTSQLLS…RSMVRLSAGR (228 aa)). 3 residues coordinate [4Fe-4S] cluster: Cys-63, Cys-67, and Cys-70. Positions 107, 138, 198, and 270 each coordinate [2Fe-2S] cluster.

It belongs to the radical SAM superfamily. Biotin synthase family. In terms of assembly, homodimer. The cofactor is [4Fe-4S] cluster. [2Fe-2S] cluster serves as cofactor.

It carries out the reaction (4R,5S)-dethiobiotin + (sulfur carrier)-SH + 2 reduced [2Fe-2S]-[ferredoxin] + 2 S-adenosyl-L-methionine = (sulfur carrier)-H + biotin + 2 5'-deoxyadenosine + 2 L-methionine + 2 oxidized [2Fe-2S]-[ferredoxin]. It participates in cofactor biosynthesis; biotin biosynthesis; biotin from 7,8-diaminononanoate: step 2/2. Its function is as follows. Catalyzes the conversion of dethiobiotin (DTB) to biotin by the insertion of a sulfur atom into dethiobiotin via a radical-based mechanism. The chain is Biotin synthase from Maricaulis maris (strain MCS10) (Caulobacter maris).